A 1495-amino-acid chain; its full sequence is DNA-directed RNA polymerase subunit 1 (1495 aa).

This sequence belongs to the RNA polymerase beta' chain family.

Its subcellular location is the virion. It catalyses the reaction RNA(n) + a ribonucleoside 5'-triphosphate = RNA(n+1) + diphosphate. DNA-dependent RNA polymerase catalyzes the transcription of DNA into RNA using the four ribonucleoside triphosphates as substrates. The polypeptide is DNA-directed RNA polymerase subunit 1 (RPO1) (Acanthamoeba polyphaga (Amoeba)).